Consider the following 154-residue polypeptide: 6,7-dimethyl-8-ribityllumazine synthase (154 aa).

5-amino-6-(D-ribitylamino)uracil is bound by residues phenylalanine 22, 56–58, and 80–82; these read AFE and TVI. Residue 85–86 coordinates (2S)-2-hydroxy-3-oxobutyl phosphate; it reads ST. Histidine 88 acts as the Proton donor in catalysis. Residue phenylalanine 113 participates in 5-amino-6-(D-ribitylamino)uracil binding. A (2S)-2-hydroxy-3-oxobutyl phosphate-binding site is contributed by arginine 127.

Belongs to the DMRL synthase family.

It carries out the reaction (2S)-2-hydroxy-3-oxobutyl phosphate + 5-amino-6-(D-ribitylamino)uracil = 6,7-dimethyl-8-(1-D-ribityl)lumazine + phosphate + 2 H2O + H(+). It functions in the pathway cofactor biosynthesis; riboflavin biosynthesis; riboflavin from 2-hydroxy-3-oxobutyl phosphate and 5-amino-6-(D-ribitylamino)uracil: step 1/2. In terms of biological role, catalyzes the formation of 6,7-dimethyl-8-ribityllumazine by condensation of 5-amino-6-(D-ribitylamino)uracil with 3,4-dihydroxy-2-butanone 4-phosphate. This is the penultimate step in the biosynthesis of riboflavin. This chain is 6,7-dimethyl-8-ribityllumazine synthase, found in Lactococcus lactis subsp. lactis (strain IL1403) (Streptococcus lactis).